The sequence spans 180 residues: Large ribosomal subunit protein uL18m (180 aa).

It belongs to the universal ribosomal protein uL18 family. In terms of assembly, component of the mitochondrial large ribosomal subunit (mt-LSU). Mature mammalian 55S mitochondrial ribosomes consist of a small (28S) and a large (39S) subunit. The 28S small subunit contains a 12S ribosomal RNA (12S mt-rRNA) and 30 different proteins. The 39S large subunit contains a 16S rRNA (16S mt-rRNA), a copy of mitochondrial valine transfer RNA (mt-tRNA(Val)), which plays an integral structural role, and 52 different proteins.

The protein localises to the mitochondrion. Functionally, together with thiosulfate sulfurtransferase (TST), acts as a mitochondrial import factor for the cytosolic 5S rRNA. The precursor form shows RNA chaperone activity; is able to fold the 5S rRNA into an import-competent conformation that is recognized by rhodanese (TST). Both the cytoplasmic and mitochondrial forms are able to bind to the helix IV-loop D in the gamma domain of the 5S rRNA. The chain is Large ribosomal subunit protein uL18m (MRPL18) from Homo sapiens (Human).